Reading from the N-terminus, the 264-residue chain is 3-methyl-2-oxobutanoate hydroxymethyltransferase (264 aa).

Residues D45 and D84 each coordinate Mg(2+). 3-methyl-2-oxobutanoate-binding positions include 45-46 (DS), D84, and K112. E114 contributes to the Mg(2+) binding site. The active-site Proton acceptor is the E181.

The protein belongs to the PanB family. In terms of assembly, homodecamer; pentamer of dimers. The cofactor is Mg(2+).

It localises to the cytoplasm. It catalyses the reaction 3-methyl-2-oxobutanoate + (6R)-5,10-methylene-5,6,7,8-tetrahydrofolate + H2O = 2-dehydropantoate + (6S)-5,6,7,8-tetrahydrofolate. It participates in cofactor biosynthesis; (R)-pantothenate biosynthesis; (R)-pantoate from 3-methyl-2-oxobutanoate: step 1/2. Functionally, catalyzes the reversible reaction in which hydroxymethyl group from 5,10-methylenetetrahydrofolate is transferred onto alpha-ketoisovalerate to form ketopantoate. The sequence is that of 3-methyl-2-oxobutanoate hydroxymethyltransferase from Shewanella sp. (strain MR-4).